The chain runs to 403 residues: Acetylornithine aminotransferase (403 aa).

Residues 107-108 and phenylalanine 140 contribute to the pyridoxal 5'-phosphate site; that span reads GA. Arginine 143 is a N(2)-acetyl-L-ornithine binding site. A pyridoxal 5'-phosphate-binding site is contributed by 225–228; sequence DEVQ. Residue lysine 254 is modified to N6-(pyridoxal phosphate)lysine. Serine 282 is a N(2)-acetyl-L-ornithine binding site. Threonine 283 serves as a coordination point for pyridoxal 5'-phosphate.

Belongs to the class-III pyridoxal-phosphate-dependent aminotransferase family. ArgD subfamily. As to quaternary structure, homodimer. Pyridoxal 5'-phosphate is required as a cofactor.

The protein resides in the cytoplasm. It catalyses the reaction N(2)-acetyl-L-ornithine + 2-oxoglutarate = N-acetyl-L-glutamate 5-semialdehyde + L-glutamate. Its pathway is amino-acid biosynthesis; L-arginine biosynthesis; N(2)-acetyl-L-ornithine from L-glutamate: step 4/4. In Vibrio vulnificus (strain YJ016), this protein is Acetylornithine aminotransferase.